The sequence spans 298 residues: Phosphatidylglycerol--prolipoprotein diacylglyceryl transferase (298 aa).

Helical transmembrane passes span 17–37 (LAVR…IVVG), 59–79 (MMFY…VLFY), 97–117 (GGMS…LFAW), 129–149 (FVAP…FING), 204–224 (SQLY…FLFA), 230–250 (MGAI…TVEF), and 257–277 (FLGL…PMIL). Arg142 contacts a 1,2-diacyl-sn-glycero-3-phospho-(1'-sn-glycerol).

It belongs to the Lgt family.

It localises to the cell inner membrane. The enzyme catalyses L-cysteinyl-[prolipoprotein] + a 1,2-diacyl-sn-glycero-3-phospho-(1'-sn-glycerol) = an S-1,2-diacyl-sn-glyceryl-L-cysteinyl-[prolipoprotein] + sn-glycerol 1-phosphate + H(+). It functions in the pathway protein modification; lipoprotein biosynthesis (diacylglyceryl transfer). In terms of biological role, catalyzes the transfer of the diacylglyceryl group from phosphatidylglycerol to the sulfhydryl group of the N-terminal cysteine of a prolipoprotein, the first step in the formation of mature lipoproteins. The protein is Phosphatidylglycerol--prolipoprotein diacylglyceryl transferase of Burkholderia orbicola (strain MC0-3).